The following is a 363-amino-acid chain: MMFLPTDYCCRLSDQEYMELVFENGQILAKGQRSNVSLHNQRTKSIMDLYEAEYNEDFMKSIIHGGGGAITNLGDTQVVPQSHVAAAHETNMLESNKHVDDSETLKASSSKRMMVDYHNRKKIKFIPPDEQSVVADRSFKLGFDTSSVGFTEDSEGSMYLSSSLDDESDDARPQVPARTRKALVKRKRNAEAYNSPERNQRNDINKKMRTLQNLLPNSHKDDNESMLDEAINYMTNLQLQVQMMTMGNRFVTPSMMMPLGPNYSQMGLAMGVGMQMGEQQFLPAHVLGAGLPGINDSADMLRFLNHPGLMPMQNSAPFIPTENCSPQSVPPSCAAFPNQIPNPNSLSNLDGATLHKKSRKTNR.

Disordered stretches follow at residues Ser154 to Ile204 and Ile340 to Arg363. The segment covering Arg178–Arg188 has biased composition (basic residues). Residues Arg188–Leu237 form the bHLH domain. Polar residues predominate over residues Ile340–Asp350. Over residues Leu354–Arg363 the composition is skewed to basic residues.

Homodimer. Interacts with APRR1/TOC1. Binds to RGL2 and RGA. Associates to PTAC12/HMR/PAP5 which acts as a transcriptional coactivator. As to expression, mainly expressed in fruits and flowers and, to a lower extent, in leaves, stems, seedlings and roots.

It is found in the nucleus. In terms of biological role, transcription factor. The polypeptide is Transcription factor PIF6 (Arabidopsis thaliana (Mouse-ear cress)).